The following is an 86-amino-acid chain: Cell division topological specificity factor (86 aa).

The protein belongs to the MinE family.

Its function is as follows. Prevents the cell division inhibition by proteins MinC and MinD at internal division sites while permitting inhibition at polar sites. This ensures cell division at the proper site by restricting the formation of a division septum at the midpoint of the long axis of the cell. This chain is Cell division topological specificity factor, found in Shewanella pealeana (strain ATCC 700345 / ANG-SQ1).